We begin with the raw amino-acid sequence, 852 residues long: Lon protease homolog 2, peroxisomal (852 aa).

Ser2 is modified (N-acetylserine). Residues 13–222 (LPLLLTHESV…MTIPLLVRQI (210 aa)) form the Lon N-terminal domain. 375-382 (GPPGVGKT) is a binding site for ATP. The region spanning 651 to 837 (LSQPGVAIGL…DEVLNAAFDG (187 aa)) is the Lon proteolytic domain. Residues Ser743 and Lys786 contribute to the active site. Positions 850-852 (SKL) match the Microbody targeting signal motif.

It belongs to the peptidase S16 family. Interacts with PEX5. Interacts with TYSND1. May interact with enzymes involved in beta-oxidation of fatty acids, including ACOX1/AOX.

It localises to the peroxisome matrix. The enzyme catalyses Hydrolysis of proteins in presence of ATP.. ATP-dependent serine protease that mediates the selective degradation of misfolded and unassembled polypeptides in the peroxisomal matrix. Necessary for type 2 peroxisome targeting signal (PTS2)-containing protein processing and facilitates peroxisome matrix protein import. May indirectly regulate peroxisomal fatty acid beta-oxidation through degradation of the self-processed forms of TYSND1. The protein is Lon protease homolog 2, peroxisomal (Lonp2) of Mus musculus (Mouse).